The sequence spans 333 residues: MITEPRLLLTVGEPAGIGPDICLQLAFHALPSGVLLIGDLHCLRSRALTLGLSLRLEPWLEGNPWPALERGVLHVLDVPLAQPCRPGRLDMANAPAVLATLDKAMHLLRAGAADALVTAPVHKGIINDAGIPFTGHTEYLAAACGSPKVVMLLAGRGLRVALATTHLPLAQVAAAVTQEGLEGTLRILHRALREDFALSEPRILVAGLNPHAGEGGHLGHEEQDVIAPVIAALQGESLRISGPWPADTLFTPRLLEDADAVLAMYHDQGLPVLKYHAFGEAVNITLGLPIVRTSVDHGTALDIAGTGRAEGGSLLRALDNAAEIVRNRRAAGC.

His-136 and Thr-137 together coordinate substrate. Residues His-166, His-211, and His-266 each contribute to the a divalent metal cation site. Substrate contacts are provided by Lys-274, Asn-283, and Arg-292.

Belongs to the PdxA family. Homodimer. Zn(2+) is required as a cofactor. Mg(2+) serves as cofactor. The cofactor is Co(2+).

Its subcellular location is the cytoplasm. It catalyses the reaction 4-(phosphooxy)-L-threonine + NAD(+) = 3-amino-2-oxopropyl phosphate + CO2 + NADH. It functions in the pathway cofactor biosynthesis; pyridoxine 5'-phosphate biosynthesis; pyridoxine 5'-phosphate from D-erythrose 4-phosphate: step 4/5. Catalyzes the NAD(P)-dependent oxidation of 4-(phosphooxy)-L-threonine (HTP) into 2-amino-3-oxo-4-(phosphooxy)butyric acid which spontaneously decarboxylates to form 3-amino-2-oxopropyl phosphate (AHAP). The polypeptide is 4-hydroxythreonine-4-phosphate dehydrogenase (Acidithiobacillus ferrooxidans (strain ATCC 23270 / DSM 14882 / CIP 104768 / NCIMB 8455) (Ferrobacillus ferrooxidans (strain ATCC 23270))).